The sequence spans 267 residues: 27 kDa core protein (267 aa).

The protein belongs to the chordopoxvirinae D3 family.

The protein resides in the virion. Late protein which is part of a large complex required for early virion morphogenesis. This complex participates in the formation of virosomes and the incorporation of virosomal contents into nascent immature virions. This chain is 27 kDa core protein, found in Canarypox virus (CNPV).